We begin with the raw amino-acid sequence, 243 residues long: Cyclin-dependent kinase 20 (243 aa).

Residues 4 to 243 form the Protein kinase domain; sequence YCILGRIGEG…IHLSCRFLSV (240 aa). ATP-binding positions include 10 to 18 and lysine 33; that span reads IGEGAHGIV. Aspartate 127 functions as the Proton acceptor in the catalytic mechanism.

The protein belongs to the protein kinase superfamily. CMGC Ser/Thr protein kinase family. CDC2/CDKX subfamily. As to quaternary structure, monomer. Interacts with TBC1D32 and MAK.

The protein resides in the nucleus. The protein localises to the cytoplasm. It is found in the cell projection. Its subcellular location is the cilium. It carries out the reaction L-seryl-[protein] + ATP = O-phospho-L-seryl-[protein] + ADP + H(+). The catalysed reaction is L-threonyl-[protein] + ATP = O-phospho-L-threonyl-[protein] + ADP + H(+). Functionally, required for high-level Shh responses in the developing neural tube. Together with TBC1D32, controls the structure of the primary cilium by coordinating assembly of the ciliary membrane and axoneme, allowing GLI2 to be properly activated in response to SHH signaling. Involved in cell growth. Activates CDK2, a kinase involved in the control of the cell cycle, by phosphorylating residue 'Thr-160'. In Macaca mulatta (Rhesus macaque), this protein is Cyclin-dependent kinase 20 (CDK20).